A 765-amino-acid chain; its full sequence is Kinesin-like protein KIN-14S (765 aa).

A Kinesin motor domain is found at 132–456; the sequence is NIRVFCRCRP…LNFASRVRGI (325 aa). 215-222 provides a ligand contact to ATP; the sequence is GQTGTGKT. Positions 469 to 534 form a coiled coil; sequence ELLKSKQMAE…ERKTRIKQES (66 aa). Disordered regions lie at residues 581 to 613 and 654 to 678; these read MPQQ…SSMD and LRPE…RGDP. Low complexity predominate over residues 602–611; the sequence is NNNSNRRSSS.

The protein belongs to the TRAFAC class myosin-kinesin ATPase superfamily. Kinesin family. KIN-14 subfamily.

This Arabidopsis thaliana (Mouse-ear cress) protein is Kinesin-like protein KIN-14S.